Reading from the N-terminus, the 234-residue chain is Biotin transport ATP-binding protein BioM (234 aa).

The ABC transporter domain maps to 1–230 (MQAIDIGHVT…YIAAMQALAR (230 aa)). 35–42 (GRNGAGKS) contributes to the ATP binding site.

It belongs to the ABC transporter superfamily. Part of a biotin transporter holocomplex composed of BioM, BioN and BioY. BioMN complexes can be readily purified, but not BioMY complexes. Only the BioMNY complex has ATPase activity.

The protein localises to the cell inner membrane. Its function is as follows. Required for biotin uptake under very low (pM) biotin concentrations but not under higher (nM) concentrations. The sequence is that of Biotin transport ATP-binding protein BioM (bioM) from Rhodobacter capsulatus (strain ATCC BAA-309 / NBRC 16581 / SB1003).